The sequence spans 561 residues: Potassium-transporting ATPase potassium-binding subunit (561 aa).

12 consecutive transmembrane segments (helical) span residues 1–21 (MMAS…LLAR), 62–82 (YLLA…LILM), 132–152 (GLTV…FALM), 173–193 (ITLY…VSQG), 253–273 (FVQM…FGDV), 283–303 (LLWS…WAEV), 327–347 (FGIL…CGAV), 356–376 (ALGG…FGGV), 379–399 (GLYG…LMIG), 416–436 (MTAL…ALAM), 483–503 (MLLA…VLAI), and 526–546 (LFIA…FIPA).

Belongs to the KdpA family. In terms of assembly, the system is composed of three essential subunits: KdpA, KdpB and KdpC.

It localises to the cell inner membrane. Functionally, part of the high-affinity ATP-driven potassium transport (or Kdp) system, which catalyzes the hydrolysis of ATP coupled with the electrogenic transport of potassium into the cytoplasm. This subunit binds the periplasmic potassium ions and delivers the ions to the membrane domain of KdpB through an intramembrane tunnel. The polypeptide is Potassium-transporting ATPase potassium-binding subunit (Erwinia tasmaniensis (strain DSM 17950 / CFBP 7177 / CIP 109463 / NCPPB 4357 / Et1/99)).